A 371-amino-acid polypeptide reads, in one-letter code: GTPase Obg (371 aa).

In terms of domain architecture, Obg spans 1 to 159 (MKFVDEAYID…KNLKLELKVL (159 aa)). Residues 160-334 (ADVGLLGMPN…LIRTIYKHVH (175 aa)) form the OBG-type G domain. GTP is bound by residues 166–173 (GMPNAGKS), 191–195 (FTTLH), 213–216 (DIPG), 284–287 (NKLD), and 315–317 (SAL). Mg(2+)-binding residues include Ser-173 and Thr-193.

This sequence belongs to the TRAFAC class OBG-HflX-like GTPase superfamily. OBG GTPase family. In terms of assembly, monomer. It depends on Mg(2+) as a cofactor.

Its subcellular location is the cytoplasm. Functionally, an essential GTPase which binds GTP, GDP and possibly (p)ppGpp with moderate affinity, with high nucleotide exchange rates and a fairly low GTP hydrolysis rate. Plays a role in control of the cell cycle, stress response, ribosome biogenesis and in those bacteria that undergo differentiation, in morphogenesis control. The chain is GTPase Obg from Delftia acidovorans (strain DSM 14801 / SPH-1).